We begin with the raw amino-acid sequence, 337 residues long: Protein-arginine kinase (337 aa).

The 229-residue stretch at 12 to 240 folds into the Phosphagen kinase C-terminal domain; sequence IVIASKVKIL…NKLILREKNQ (229 aa). ATP contacts are provided by residues 15–19, 162–166, and 193–198; these read ASKVK, RTKVF, and KSIYNS.

The protein belongs to the ATP:guanido phosphotransferase family.

The enzyme catalyses L-arginyl-[protein] + ATP = N(omega)-phospho-L-arginyl-[protein] + ADP + H(+). In terms of biological role, catalyzes the specific phosphorylation of arginine residues in proteins. This Clostridium perfringens (strain 13 / Type A) protein is Protein-arginine kinase.